A 356-amino-acid polypeptide reads, in one-letter code: Fructose-1,6-bisphosphatase class 1 (356 aa).

The interval 1 to 26 (MAREWPMTHPSNHPMDHHHQTLQAHL) is disordered. The Mg(2+) site is built by Glu-101, Asp-120, Leu-122, and Asp-123. Substrate is bound by residues 123 to 126 (DGSS) and Asn-211. Mg(2+) is bound at residue Glu-283.

This sequence belongs to the FBPase class 1 family. As to quaternary structure, homotetramer. Mg(2+) serves as cofactor.

Its subcellular location is the cytoplasm. The catalysed reaction is beta-D-fructose 1,6-bisphosphate + H2O = beta-D-fructose 6-phosphate + phosphate. Its pathway is carbohydrate biosynthesis; Calvin cycle. The protein is Fructose-1,6-bisphosphatase class 1 of Bradyrhizobium sp. (strain ORS 278).